The sequence spans 252 residues: Expansin-A12 (252 aa).

An N-terminal signal peptide occupies residues 1-23 (MDMKGTYLVTVILLVSTLSVGMC). The region spanning 45–156 (GGACGYDNPY…RRVGCKRRGG (112 aa)) is the Expansin-like EG45 domain. Residues 166–246 (NFNMVMISNV…SWWFGQTFSS (81 aa)) enclose the Expansin-like CBD domain.

Belongs to the expansin family. Expansin A subfamily.

The protein localises to the secreted. It localises to the cell wall. It is found in the membrane. Causes loosening and extension of plant cell walls by disrupting non-covalent bonding between cellulose microfibrils and matrix glucans. No enzymatic activity has been found. This is Expansin-A12 (EXPA12) from Arabidopsis thaliana (Mouse-ear cress).